The following is a 215-amino-acid chain: MVTAEMVKELRERTGAGMMECKKALTEANGDMEKAIEILRERGLAAAAKKAGRIAAEGVVDAYIHGDGRIGVLVEINTETDFAAKNEDFRTFVKDIAMHIAASKPEYISRDEVPAERVEKEKEILRAQALNEGKPEKIVEKMVEGRLEKFYKEICLLEQPFIKDPDKTVQQLLNEKIAIIGENINIRRFVRFERGEGIQKKEENFAEEVMKQING.

Residues 80–83 are involved in Mg(2+) ion dislocation from EF-Tu; that stretch reads TDFA.

Belongs to the EF-Ts family.

Its subcellular location is the cytoplasm. Functionally, associates with the EF-Tu.GDP complex and induces the exchange of GDP to GTP. It remains bound to the aminoacyl-tRNA.EF-Tu.GTP complex up to the GTP hydrolysis stage on the ribosome. This is Elongation factor Ts from Acetivibrio thermocellus (strain ATCC 27405 / DSM 1237 / JCM 9322 / NBRC 103400 / NCIMB 10682 / NRRL B-4536 / VPI 7372) (Clostridium thermocellum).